We begin with the raw amino-acid sequence, 290 residues long: ATP synthase gamma chain (290 aa).

Belongs to the ATPase gamma chain family. In terms of assembly, F-type ATPases have 2 components, CF(1) - the catalytic core - and CF(0) - the membrane proton channel. CF(1) has five subunits: alpha(3), beta(3), gamma(1), delta(1), epsilon(1). CF(0) has four main subunits: a, b, b' and c.

It is found in the cellular chromatophore membrane. Produces ATP from ADP in the presence of a proton gradient across the membrane. The gamma chain is believed to be important in regulating ATPase activity and the flow of protons through the CF(0) complex. The protein is ATP synthase gamma chain of Rhodobacter capsulatus (Rhodopseudomonas capsulata).